A 1188-amino-acid chain; its full sequence is Carboxylic acid reductase (1188 aa).

Residues His315, Ser408, 429 to 430 (DG), Thr434, Asp507, 519 to 522 (YVDR), Lys528, and Lys629 each bind AMP. The Carrier domain occupies 665 to 743 (AGERPVIETV…SVAAHIEKER (79 aa)). An O-(pantetheine 4'-phosphoryl)serine modification is found at Ser702. Residues 801 to 804 (NGWL), Arg828, Arg838, 868 to 869 (DF), 894 to 896 (SGA), Ser934, Tyr970, Lys974, and Ser997 contribute to the NADP(+) site.

Belongs to the ATP-dependent AMP-binding enzyme family. Carboxylic acid reductase subfamily. Pantetheine 4'-phosphate serves as cofactor.

The catalysed reaction is a carboxylate + ATP + NADPH + H(+) = an aldehyde + AMP + diphosphate + NADP(+). In terms of biological role, catalyzes the ATP- and NADPH-dependent reduction of carboxylic acids to the corresponding aldehydes. Catalyzes the reduction of a very wide range of carboxylic acids, including benzoic acids, heterocyclic, phenylacetic, phenylpropanoic and fatty acid substrates. The chain is Carboxylic acid reductase from Segniliparus rugosus (strain ATCC BAA-974 / DSM 45345 / CCUG 50838 / CIP 108380 / JCM 13579 / CDC 945).